The sequence spans 492 residues: MANNYKKIVLLKGLEVINDYHFRIVKSLLSNDLKLNPKMKEEYDKIQIADLMEEKFPGDAGLGKLIEFFKEIPTLGDLAETLKREKLKVANKIESIPVKGIIPSKKTKQKEVYPATPACTPSNRLTAKGAEETLGPQKRKKPSEEETGTKRSKMSKEQTRPSCSAGASTSTAMGRSPPPQTSSSAPPNTSSTESLKPLANRHATASKNIFREDPIIAMVLNATKVFKYESSENEQRRMFHATVATQTQFFHVKVLNINLKRKFIKKRIIIISNYSKRNSLLEVNEASSVSEAGPDQTFEVPKDIIRRAKKIPKINILHKQTSGYIVYGLFMLHTKIVNRKTTIYEIQDKTGSMAVVGKGECHNIPCEKGDKLRLFCFRLRKRENMSKLMSEMHSFIQIQKNTNQRSHDSRSMALPQEQSQHPKPSEASTTLPESHLKTPQMPPTTPSSSSFTKKDETHPGAQSSPANFRITSPTVAPPLSSDTSTNRHPAVP.

The 88-residue stretch at 1-88 folds into the Pyrin domain; sequence MANNYKKIVL…AETLKREKLK (88 aa). Disordered regions lie at residues 106-199 and 400-492; these read KTKQ…KPLA and KNTN…PAVP. Positions 142 to 159 are enriched in basic and acidic residues; sequence PSEEETGTKRSKMSKEQT. Residues 160-173 show a composition bias toward polar residues; sequence RPSCSAGASTSTAM. The segment covering 181 to 194 has biased composition (low complexity); sequence TSSSAPPNTSSTES. The 201-residue stretch at 199–399 folds into the HIN-200 domain; the sequence is ANRHATASKN…SEMHSFIQIQ (201 aa). 2 stretches are compositionally biased toward polar residues: residues 416 to 432 and 460 to 492; these read QEQS…TTLP and GAQS…PAVP.

This sequence belongs to the HIN-200 family. In terms of assembly, interacts with MDM2. As to expression, expressed in spleen, lymph node and peripheral blood leukocytes, and at lower levels in thymus, bone marrow and fetal liver. Down-regulated in breast tumors.

It is found in the nucleus. Its subcellular location is the nucleoplasm. It localises to the nucleus speckle. Its function is as follows. Major mediator of the tumor suppressor activity of IFN in breast cancer cells. Promotes ubiquitination and subsequent degradation of MDM2, which leads to p53/TP53 stabilization. Promotes ubiquitination and subsequent degradation of HDAC1, which in turn enhances maspin expression, and impairs invasive activity of cancer cells. The sequence is that of Pyrin and HIN domain-containing protein 1 (PYHIN1) from Homo sapiens (Human).